We begin with the raw amino-acid sequence, 206 residues long: Imidazole glycerol phosphate synthase subunit HisH (206 aa).

The 202-residue stretch at 5–206 folds into the Glutamine amidotransferase type-1 domain; the sequence is SVVVLDYGSG…AVLRNWIERL (202 aa). The active-site Nucleophile is Cys-83. Active-site residues include His-187 and Glu-189.

In terms of assembly, heterodimer of HisH and HisF.

It localises to the cytoplasm. The enzyme catalyses 5-[(5-phospho-1-deoxy-D-ribulos-1-ylimino)methylamino]-1-(5-phospho-beta-D-ribosyl)imidazole-4-carboxamide + L-glutamine = D-erythro-1-(imidazol-4-yl)glycerol 3-phosphate + 5-amino-1-(5-phospho-beta-D-ribosyl)imidazole-4-carboxamide + L-glutamate + H(+). It carries out the reaction L-glutamine + H2O = L-glutamate + NH4(+). It participates in amino-acid biosynthesis; L-histidine biosynthesis; L-histidine from 5-phospho-alpha-D-ribose 1-diphosphate: step 5/9. In terms of biological role, IGPS catalyzes the conversion of PRFAR and glutamine to IGP, AICAR and glutamate. The HisH subunit catalyzes the hydrolysis of glutamine to glutamate and ammonia as part of the synthesis of IGP and AICAR. The resulting ammonia molecule is channeled to the active site of HisF. The sequence is that of Imidazole glycerol phosphate synthase subunit HisH from Mycolicibacterium paratuberculosis (strain ATCC BAA-968 / K-10) (Mycobacterium paratuberculosis).